The chain runs to 356 residues: GDP-mannose:di-myo-inositol-1,3'-phosphate beta-1,2-mannosyltransferase (356 aa).

The protein belongs to the MDIP synthase family. Mg(2+) is required as a cofactor.

It catalyses the reaction bis(myo-inositol) 1,3'-phosphate + GDP-alpha-D-mannose = 2-O-(beta-D-mannosyl)-bis(myo-inositol) 1,3'-phosphate + GDP + H(+). It carries out the reaction 2-O-(beta-D-mannosyl)-bis(myo-inositol) 1,3'-phosphate + GDP-alpha-D-mannose = 2-O-(beta-D-mannosyl-(1-&gt;2)-beta-D-mannosyl)-bis(myo-inositol) 1,3'-phosphate + GDP + H(+). The catalysed reaction is bis(myo-inositol) 1,3'-phosphate + 2 GDP-alpha-D-mannose = 2-O-(beta-D-mannosyl-(1-&gt;2)-beta-D-mannosyl)-bis(myo-inositol) 1,3'-phosphate + 2 GDP + 2 H(+). Its function is as follows. Catalyzes the transfer of the mannosyl group from GDP-mannose to di-myo-inositol-1,3'-phosphate (DIP), producing mannosyl-di-myo-inositol phosphate (MDIP). Can also use MDIP as an acceptor of a second mannose residue, yielding di-mannosyl-di-myo-inositol phosphate (MMDIP). The polypeptide is GDP-mannose:di-myo-inositol-1,3'-phosphate beta-1,2-mannosyltransferase (Aquifex aeolicus (strain VF5)).